A 446-amino-acid chain; its full sequence is Glutamyl-tRNA reductase (446 aa).

Residues 49–52 (TCNR), S109, 114–116 (ETQ), and Q120 contribute to the substrate site. C50 functions as the Nucleophile in the catalytic mechanism. Position 189–194 (189–194 (GAGETG)) interacts with NADP(+).

It belongs to the glutamyl-tRNA reductase family. In terms of assembly, homodimer.

It carries out the reaction (S)-4-amino-5-oxopentanoate + tRNA(Glu) + NADP(+) = L-glutamyl-tRNA(Glu) + NADPH + H(+). It functions in the pathway porphyrin-containing compound metabolism; protoporphyrin-IX biosynthesis; 5-aminolevulinate from L-glutamyl-tRNA(Glu): step 1/2. Functionally, catalyzes the NADPH-dependent reduction of glutamyl-tRNA(Glu) to glutamate 1-semialdehyde (GSA). The protein is Glutamyl-tRNA reductase of Exiguobacterium sibiricum (strain DSM 17290 / CCUG 55495 / CIP 109462 / JCM 13490 / 255-15).